The sequence spans 178 residues: Peptide deformylase (178 aa).

The Fe cation site is built by C102 and H144. The active site involves E145. A Fe cation-binding site is contributed by H148.

It belongs to the polypeptide deformylase family. The cofactor is Fe(2+).

The catalysed reaction is N-terminal N-formyl-L-methionyl-[peptide] + H2O = N-terminal L-methionyl-[peptide] + formate. Functionally, removes the formyl group from the N-terminal Met of newly synthesized proteins. Requires at least a dipeptide for an efficient rate of reaction. N-terminal L-methionine is a prerequisite for activity but the enzyme has broad specificity at other positions. This is Peptide deformylase from Leptospira interrogans serogroup Icterohaemorrhagiae serovar copenhageni (strain Fiocruz L1-130).